The chain runs to 434 residues: Probable glycine dehydrogenase (decarboxylating) subunit 1 (434 aa).

Belongs to the GcvP family. N-terminal subunit subfamily. In terms of assembly, the glycine cleavage system is composed of four proteins: P, T, L and H. In this organism, the P 'protein' is a heterodimer of two subunits.

It catalyses the reaction N(6)-[(R)-lipoyl]-L-lysyl-[glycine-cleavage complex H protein] + glycine + H(+) = N(6)-[(R)-S(8)-aminomethyldihydrolipoyl]-L-lysyl-[glycine-cleavage complex H protein] + CO2. The glycine cleavage system catalyzes the degradation of glycine. The P protein binds the alpha-amino group of glycine through its pyridoxal phosphate cofactor; CO(2) is released and the remaining methylamine moiety is then transferred to the lipoamide cofactor of the H protein. In Thermoplasma volcanium (strain ATCC 51530 / DSM 4299 / JCM 9571 / NBRC 15438 / GSS1), this protein is Probable glycine dehydrogenase (decarboxylating) subunit 1.